Here is a 515-residue protein sequence, read N- to C-terminus: Bifunctional purine biosynthesis protein PurH (515 aa).

One can recognise an MGS-like domain in the interval 1 to 145; the sequence is MTKRALISVS…KNHASVTVVV (145 aa).

It belongs to the PurH family.

It carries out the reaction (6R)-10-formyltetrahydrofolate + 5-amino-1-(5-phospho-beta-D-ribosyl)imidazole-4-carboxamide = 5-formamido-1-(5-phospho-D-ribosyl)imidazole-4-carboxamide + (6S)-5,6,7,8-tetrahydrofolate. The enzyme catalyses IMP + H2O = 5-formamido-1-(5-phospho-D-ribosyl)imidazole-4-carboxamide. The protein operates within purine metabolism; IMP biosynthesis via de novo pathway; 5-formamido-1-(5-phospho-D-ribosyl)imidazole-4-carboxamide from 5-amino-1-(5-phospho-D-ribosyl)imidazole-4-carboxamide (10-formyl THF route): step 1/1. Its pathway is purine metabolism; IMP biosynthesis via de novo pathway; IMP from 5-formamido-1-(5-phospho-D-ribosyl)imidazole-4-carboxamide: step 1/1. The protein is Bifunctional purine biosynthesis protein PurH of Streptococcus pyogenes serotype M18 (strain MGAS8232).